A 791-amino-acid chain; its full sequence is Putative inactive tyrosine-protein kinase Wsck (791 aa).

The first 26 residues, 1-26, serve as a signal peptide directing secretion; it reads MECGSHSGHRPIPIWLSSCLVAMCLG. The Extracellular portion of the chain corresponds to 27–401; sequence LPLGAAVPQE…YATFEKGQSS (375 aa). The region spanning 39-125 is the WSC domain; it reads AYYYVGCYTA…VGVHSYYSTI (87 aa). Positions 131–246 constitute a Fibronectin type-III domain; it reads GPHHLRISNK…ASIEATTEVG (116 aa). N-linked (GlcNAc...) asparagine glycosylation is found at Asn139, Asn217, and Asn329. Residues 402–422 form a helical membrane-spanning segment; it reads VVALAVTCVIFGSCLLLSLIA. Residues 423–791 lie on the Cytoplasmic side of the membrane; the sequence is YFYLRYKTCR…PQLEAVATMG (369 aa). In terms of domain architecture, Protein kinase spans 493–758; it reads LNVNDVIGDG…DVAFGVRQLM (266 aa). 499 to 507 is a binding site for ATP; the sequence is IGDGRFGEI.

It belongs to the protein kinase superfamily. Tyr protein kinase family.

The protein resides in the membrane. Probably lacks tyrosine-protein kinase activity. In Drosophila melanogaster (Fruit fly), this protein is Putative inactive tyrosine-protein kinase Wsck.